Here is a 319-residue protein sequence, read N- to C-terminus: MKSSHPVNFQQMILALQEYWASQGCVLLQPFDMEVGAGTFHPATFLRAIGPEPWRAAYVQPSRRPTDGRYGDNPNRTQHYYQFQVVLKPSPDDIQDIYLGSLKALGIDPLTHDIRFVEDNWEAPTLGSWGVGWEVWQDGMEITQFTYFQQIGGLECKPVTGEITYGLERLAMFLQGIDNMFDLVWTEGPNGRVTYGQIFQQNEVEMSAYNFEYANVEALFNFFDFYEKEASQLIEVHLPLAAYEMVLKASHTFNLLDARQAISVTERQRFILRVRKLAQAVAEAYYSAREKLGFPMLEEISSSSSRVLPLAGNDRVKGC.

It belongs to the class-II aminoacyl-tRNA synthetase family. In terms of assembly, tetramer of two alpha and two beta subunits.

It is found in the cytoplasm. The enzyme catalyses tRNA(Gly) + glycine + ATP = glycyl-tRNA(Gly) + AMP + diphosphate. The protein is Glycine--tRNA ligase alpha subunit of Coxiella burnetii (strain CbuK_Q154) (Coxiella burnetii (strain Q154)).